We begin with the raw amino-acid sequence, 384 residues long: Putative 8-amino-7-oxononanoate synthase (384 aa).

Arg-18 serves as a coordination point for substrate. 105–106 is a binding site for pyridoxal 5'-phosphate; it reads GY. His-130 provides a ligand contact to substrate. Pyridoxal 5'-phosphate is bound by residues Ser-176, 201–204, and 233–236; these read DDAH and TLSK. An N6-(pyridoxal phosphate)lysine modification is found at Lys-236. Position 349 (Thr-349) interacts with substrate.

Belongs to the class-II pyridoxal-phosphate-dependent aminotransferase family. BioF subfamily. Homodimer. The cofactor is pyridoxal 5'-phosphate.

It carries out the reaction 6-carboxyhexanoyl-[ACP] + L-alanine + H(+) = (8S)-8-amino-7-oxononanoate + holo-[ACP] + CO2. Its pathway is cofactor biosynthesis; biotin biosynthesis. In terms of biological role, catalyzes the decarboxylative condensation of pimeloyl-[acyl-carrier protein] and L-alanine to produce 8-amino-7-oxononanoate (AON), [acyl-carrier protein], and carbon dioxide. The sequence is that of Putative 8-amino-7-oxononanoate synthase (bioF) from Desulfovibrio desulfuricans (strain ATCC 27774 / DSM 6949 / MB).